The primary structure comprises 389 residues: Na(+)/H(+) antiporter NhaA (389 aa).

11 consecutive transmembrane segments (helical) span residues 17–37, 59–79, 95–115, 124–144, 154–174, 177–197, 213–233, 261–281, 287–307, 328–348, and 363–383; these read ILLLVAVALAMLMANSPLAGL, LLLWINDGLMALFFLLIGLEV, SLPTFAAIGGMLVPAGIYLLF, AGWAIPAATDIAFALGIMALL, VFLLALAIIDDLGVIVIIALF, TDLSTISLIIASIAIVGLVAL, LVLWVAVLKSGVHATLAGVII, FLILPVFAFANAGVALGNMSL, PVPVGIALGLMLGKPIGVMLF, IAPVAAMCGIGFTMSMFIASL, and LGTLIGSILAALIGYFWLSKV.

This sequence belongs to the NhaA Na(+)/H(+) (TC 2.A.33) antiporter family.

The protein localises to the cell inner membrane. The enzyme catalyses Na(+)(in) + 2 H(+)(out) = Na(+)(out) + 2 H(+)(in). Functionally, na(+)/H(+) antiporter that extrudes sodium in exchange for external protons. The protein is Na(+)/H(+) antiporter NhaA of Shewanella sp. (strain MR-4).